Reading from the N-terminus, the 490-residue chain is Dual specificity protein kinase CLK3 (490 aa).

The segment at 1–138 is disordered; that stretch reads MHHCKRYRSP…SKRSSRSVED (138 aa). Phosphotyrosine is present on tyrosine 7. Residues serine 9, serine 49, serine 51, serine 67, serine 76, and serine 78 each carry the phosphoserine modification. Basic and acidic residues-rich tracts occupy residues 26–56 and 63–76; these read YSRE…DRIP and EHRD…EERS. The span at 88-116 shows a compositional bias: basic residues; the sequence is RSRHRRRSRERAPYRTRKHAHHCHKRRTR. Over residues 117–130 the composition is skewed to low complexity; the sequence is SCSSASSRSQQSSK. At serine 135 the chain carries Phosphoserine. The region spanning 156–472 is the Protein kinase domain; it reads YEIVGNLGEG…LAEALLHPFF (317 aa). ATP is bound by residues 162–170 and lysine 186; that span reads LGEGTFGKV. Aspartate 283 acts as the Proton acceptor in catalysis.

This sequence belongs to the protein kinase superfamily. CMGC Ser/Thr protein kinase family. Lammer subfamily. Post-translationally, autophosphorylates on all three types of residues. Present at high levels in testis and ovary. In testis, expression is restricted to elongated, maturing spermatozoa. Also present in spleen, brain, lung and liver (at protein level).

The protein resides in the nucleus. It is found in the cytoplasm. The protein localises to the cytoplasmic vesicle. It localises to the secretory vesicle. Its subcellular location is the acrosome. The catalysed reaction is L-seryl-[protein] + ATP = O-phospho-L-seryl-[protein] + ADP + H(+). The enzyme catalyses L-threonyl-[protein] + ATP = O-phospho-L-threonyl-[protein] + ADP + H(+). It carries out the reaction L-tyrosyl-[protein] + ATP = O-phospho-L-tyrosyl-[protein] + ADP + H(+). Its activity is regulated as follows. Leucettine L41 inhibits its kinase activity and affects the regulation of alternative splicing mediated by phosphorylation of SR proteins. In terms of biological role, dual specificity kinase acting on both serine/threonine and tyrosine-containing substrates. Phosphorylates serine- and arginine-rich (SR) proteins of the spliceosomal complex. May be a constituent of a network of regulatory mechanisms that enable SR proteins to control RNA splicing and can cause redistribution of SR proteins from speckles to a diffuse nucleoplasmic distribution. Phosphorylates SRSF1 and SRSF3. Regulates the alternative splicing of tissue factor (F3) pre-mRNA in endothelial cells. The chain is Dual specificity protein kinase CLK3 from Mus musculus (Mouse).